Reading from the N-terminus, the 474-residue chain is Equilibrative nucleoside transporter 3 (474 aa).

Over Met1–Thr53 the chain is Cytoplasmic. Ser21 and Ser23 each carry phosphoserine. The Dileucine internalization motif signature appears at Leu31–Leu32. A helical membrane pass occupies residues Tyr54–Ala74. Topologically, residues Gln75 to Ser105 are extracellular. Asn84 is a glycosylation site (N-linked (GlcNAc...) asparagine). Residues Tyr106–Val126 form a helical membrane-spanning segment. At Asn127–Arg134 the chain is on the cytoplasmic side. The helical transmembrane segment at Val135–Val155 threads the bilayer. Residues Asp156 to Thr161 lie on the Extracellular side of the membrane. A helical transmembrane segment spans residues His162 to Phe182. Residues Asn183 to Leu201 are Cytoplasmic-facing. The helical transmembrane segment at Ile202–Val222 threads the bilayer. Residues Ala223–Thr230 are Extracellular-facing. A helical membrane pass occupies residues Leu231–Leu251. At Pro252–Thr305 the chain is on the cytoplasmic side. The segment at Glu272–Thr294 is disordered. Positions Pro276–Pro292 are enriched in polar residues. Residues Gly306–Cys326 form a helical membrane-spanning segment. Topologically, residues Thr327–Pro339 are extracellular. The helical transmembrane segment at Trp340–Ala357 threads the bilayer. Over Asp358–Lys376 the chain is Cytoplasmic. The helical transmembrane segment at Ala377–Tyr397 threads the bilayer. At Gln398–Pro414 the chain is on the extracellular side. Residues Val415–Tyr435 traverse the membrane as a helical segment. Residues Gly436 to Thr453 lie on the Cytoplasmic side of the membrane. Residues Phe454–Ile474 form a helical membrane-spanning segment.

Belongs to the SLC29A/ENT transporter (TC 2.A.57) family.

It localises to the lysosome membrane. The protein localises to the late endosome membrane. The protein resides in the mitochondrion membrane. Its subcellular location is the cell membrane. It catalyses the reaction adenosine(in) = adenosine(out). The catalysed reaction is guanosine(in) = guanosine(out). The enzyme catalyses inosine(in) = inosine(out). It carries out the reaction uridine(out) = uridine(in). It catalyses the reaction cytidine(in) = cytidine(out). The catalysed reaction is thymidine(in) = thymidine(out). The enzyme catalyses 2'-deoxyadenosine(in) = 2'-deoxyadenosine(out). It carries out the reaction 2'-deoxycytidine(in) = 2'-deoxycytidine(out). It catalyses the reaction guanine(out) = guanine(in). The catalysed reaction is uracil(in) = uracil(out). The enzyme catalyses (R)-noradrenaline(out) = (R)-noradrenaline(in). It carries out the reaction dopamine(out) = dopamine(in). It catalyses the reaction serotonin(out) = serotonin(in). The catalysed reaction is tyramine(in) = tyramine(out). The enzyme catalyses ATP(in) = ATP(out). In terms of biological role, uniporter that mediates the facilitative transport of nucleoside across lysosomal and mitochondrial membranes. Functions as a non-electrogenic Na(+)-independent transporter. Substrate transport is pH-dependent and enhanced under acidic condition, probably reflecting the location of the transporter in acidic intracellular compartments. Proton is not a cotransporting ion but most likely change the ionization state of the transporter which dictates transport-permissible/impermissible conformation for nucleoside translocation. May direct the nucleoside transport from lysosomes to cytosol or cytosol to mitochondria to facilitate the fundamental function of salvage synthesis of nucleic acids. Involved in the transport of nucleosides (adenosine, guanosine, uridine, thymidine, cytidine and inosine) and deoxynucleosides (deoxyadenosine, deoxycytidine). Also mediates transport of purine nucleobases (adenine, guanine) and pyrimidine nucleobases (uracil). Also able to transport monoamine neurotransmitters dopamine, serotonin, noradrenaline and tyramine. Capable of transporting ATP. Mediates nucleoside export from lysosomes in macrophages, which regulates macrophage functions and numbers. The sequence is that of Equilibrative nucleoside transporter 3 (SLC29A3) from Bos taurus (Bovine).